Here is a 156-residue protein sequence, read N- to C-terminus: Protein BUNDLE SHEATH DEFECTIVE 2, chloroplastic (156 aa).

A chloroplast-targeting transit peptide spans 1-41 (MNSAALNARTASVAPQPQACHACKCRQLLSRRVPPAQRQVE). Zn(2+) contacts are provided by Cys78, Cys81, Cys89, Cys92, Cys133, Cys136, Cys144, and Cys147.

The protein belongs to the BSD2 chaperone family. As to quaternary structure, interacts with the RuBisCo large subunit (RbcL) assembled as an intermediate complex made of eight RbcL and eight BSD2 subunits.

It is found in the plastid. The protein localises to the chloroplast stroma. Its function is as follows. Chloroplast chaperone required for RuBisCo biogenesis and translational regulation of the RuBisCo large subunit (RbcL). Stabilizes an end-state assembly intermediate of eight RbcL subunits until the small subunits (RBCSs) become available to produce a complete stable RuBisCo complex containing eight small and eight large subunits. This is Protein BUNDLE SHEATH DEFECTIVE 2, chloroplastic from Chlamydomonas reinhardtii (Chlamydomonas smithii).